Consider the following 484-residue polypeptide: Chromosomal replication initiator protein DnaA (484 aa).

The interval 1–74 is domain I, interacts with DnaA modulators; the sequence is MEKSKNIWSL…ILTKNGYNNV (74 aa). Residues 74–139 form a domain II region; it reads VTIVFTNQPP…EEEPTNFKNP (66 aa). The interval 140 to 356 is domain III, AAA+ region; that stretch reads FLKKRYTFEN…AAVTKLKAYI (217 aa). Positions 184, 186, 187, and 188 each coordinate ATP. The tract at residues 357–484 is domain IV, binds dsDNA; the sequence is DLDNIEIDID…TELMNKIKKN (128 aa).

The protein belongs to the DnaA family. In terms of assembly, oligomerizes as a right-handed, spiral filament on DNA at oriC.

It is found in the cytoplasm. Functionally, plays an essential role in the initiation and regulation of chromosomal replication. ATP-DnaA binds to the origin of replication (oriC) to initiate formation of the DNA replication initiation complex once per cell cycle. Binds the DnaA box (a 9 base pair repeat at the origin) and separates the double-stranded (ds)DNA. Forms a right-handed helical filament on oriC DNA; dsDNA binds to the exterior of the filament while single-stranded (ss)DNA is stabiized in the filament's interior. The ATP-DnaA-oriC complex binds and stabilizes one strand of the AT-rich DNA unwinding element (DUE), permitting loading of DNA polymerase. After initiation quickly degrades to an ADP-DnaA complex that is not apt for DNA replication. Binds acidic phospholipids. This chain is Chromosomal replication initiator protein DnaA, found in Borrelia garinii subsp. bavariensis (strain ATCC BAA-2496 / DSM 23469 / PBi) (Borreliella bavariensis).